The chain runs to 197 residues: FMN-dependent NADH:quinone oxidoreductase (197 aa).

FMN-binding positions include S10, 16–18 (SKS), and 96–99 (MYNF).

This sequence belongs to the azoreductase type 1 family. In terms of assembly, homodimer. The cofactor is FMN.

It carries out the reaction 2 a quinone + NADH + H(+) = 2 a 1,4-benzosemiquinone + NAD(+). The catalysed reaction is N,N-dimethyl-1,4-phenylenediamine + anthranilate + 2 NAD(+) = 2-(4-dimethylaminophenyl)diazenylbenzoate + 2 NADH + 2 H(+). In terms of biological role, quinone reductase that provides resistance to thiol-specific stress caused by electrophilic quinones. Also exhibits azoreductase activity. Catalyzes the reductive cleavage of the azo bond in aromatic azo compounds to the corresponding amines. This Marinomonas sp. (strain MWYL1) protein is FMN-dependent NADH:quinone oxidoreductase.